The sequence spans 346 residues: MSGNTSSLSYKDAGVDIDAGNALVDRIKGAVKRTRRPEVMGGIGGFGALCELPTKYKEPVLVSGTDGVGTKLRLALDLKKHDTIGIDLVAMCVNDLIVQGGEPLFFLDYYATGKLDVDTAADVVSGIAEGCVQAGCALIGGETAEMPGMYEGDDYDVAGFCVGVVEKADIIDGTKVAAGDALIAVGSSGPHSNGYSLIRKVLEVSGADKSEELEGRTIGEHLLEPTKIYIKSALKMIAEHDIHAISHITGGGFWENIPRVLPEGTKAVIDGKSWEWPAIFNWLQEKGNVETFEMYRTFNCGVGLVVALPKDQADAAVELLKAEGENAWVIGEIANAEAGEEQVEIK.

This sequence belongs to the AIR synthase family.

It localises to the cytoplasm. The enzyme catalyses 2-formamido-N(1)-(5-O-phospho-beta-D-ribosyl)acetamidine + ATP = 5-amino-1-(5-phospho-beta-D-ribosyl)imidazole + ADP + phosphate + H(+). It functions in the pathway purine metabolism; IMP biosynthesis via de novo pathway; 5-amino-1-(5-phospho-D-ribosyl)imidazole from N(2)-formyl-N(1)-(5-phospho-D-ribosyl)glycinamide: step 2/2. In Vibrio atlanticus (strain LGP32) (Vibrio splendidus (strain Mel32)), this protein is Phosphoribosylformylglycinamidine cyclo-ligase.